A 222-amino-acid chain; its full sequence is Octanoyltransferase (222 aa).

Positions 32–207 (RDRPDVLMLL…AFARVFGVQC (176 aa)) constitute a BPL/LPL catalytic domain. Substrate contacts are provided by residues 72-79 (RGGEVTYH), 139-141 (ALG), and 152-154 (GFA). The active-site Acyl-thioester intermediate is cysteine 170.

The protein belongs to the LipB family.

Its subcellular location is the cytoplasm. The enzyme catalyses octanoyl-[ACP] + L-lysyl-[protein] = N(6)-octanoyl-L-lysyl-[protein] + holo-[ACP] + H(+). It participates in protein modification; protein lipoylation via endogenous pathway; protein N(6)-(lipoyl)lysine from octanoyl-[acyl-carrier-protein]: step 1/2. Catalyzes the transfer of endogenously produced octanoic acid from octanoyl-acyl-carrier-protein onto the lipoyl domains of lipoate-dependent enzymes. Lipoyl-ACP can also act as a substrate although octanoyl-ACP is likely to be the physiological substrate. The polypeptide is Octanoyltransferase (Gloeobacter violaceus (strain ATCC 29082 / PCC 7421)).